The sequence spans 136 residues: MSERTLVLVKPDGVERGLVGEVIGRIERKGLKLVALELRQVEQQLAEQHYAEHDGKPFFGSLLEFITSGPVVAAVVEGPRAISAFRQLAGGTDPVDKAAPGSIRGDYGLEVQYNLVHGSDSAESAEREIKLWFPEL.

Residues lysine 10, phenylalanine 58, arginine 86, threonine 92, arginine 104, and asparagine 114 each coordinate ATP. Catalysis depends on histidine 117, which acts as the Pros-phosphohistidine intermediate.

It belongs to the NDK family. In terms of assembly, homotetramer. Requires Mg(2+) as cofactor.

The protein resides in the cytoplasm. The enzyme catalyses a 2'-deoxyribonucleoside 5'-diphosphate + ATP = a 2'-deoxyribonucleoside 5'-triphosphate + ADP. It carries out the reaction a ribonucleoside 5'-diphosphate + ATP = a ribonucleoside 5'-triphosphate + ADP. Functionally, major role in the synthesis of nucleoside triphosphates other than ATP. The ATP gamma phosphate is transferred to the NDP beta phosphate via a ping-pong mechanism, using a phosphorylated active-site intermediate. In Saccharopolyspora erythraea (strain ATCC 11635 / DSM 40517 / JCM 4748 / NBRC 13426 / NCIMB 8594 / NRRL 2338), this protein is Nucleoside diphosphate kinase.